The sequence spans 668 residues: Potassium voltage-gated channel subfamily KQT member 1 (668 aa).

The Cytoplasmic segment spans residues 1–119; the sequence is MDTASSPPSA…YNFLERPTGW (119 aa). The residue at position 27 (Ser27) is a Phosphoserine; by PKA. The chain crosses the membrane as a helical span at residues 120-141; sequence KCFVYHFTVFLIVLVCLIFSVL. The Extracellular portion of the chain corresponds to 142 to 152; that stretch reads STIEQYAALAT. The chain crosses the membrane as a helical span at residues 153–175; that stretch reads GTLFWMEIVLVVFFGTEYVVRLW. Topologically, residues 176 to 191 are cytoplasmic; that stretch reads SAGCRSKYVGIWGRLR. A helical transmembrane segment spans residues 192-217; it reads FARKPISIIDLIVVVASMVVLCVGSK. At 218-225 the chain is on the extracellular side; it reads GQVFATSA. The helical; Voltage-sensor transmembrane segment at 226-241 threads the bilayer; that stretch reads IRGIRFLQILRMLHVD. Residues 237–245 are interaction with KCNE3; that stretch reads MLHVDRQGG. Residues 242–259 are Cytoplasmic-facing; it reads RQGGTWRLLGSVVFIHRQ. A 1,2-diacyl-sn-glycero-3-phospho-(1D-myo-inositol-4,5-bisphosphate) is bound at residue Gln243. Residues 260 to 282 form a helical membrane-spanning segment; it reads ELITTLYIGFLGLIFSSYFVYLA. The Extracellular portion of the chain corresponds to 283 to 298; sequence EKDAVNESGRIEFGSY. Residue Asn288 is glycosylated (N-linked (GlcNAc...) asparagine). The segment at residues 299 to 319 is an intramembrane region (pore-forming); that stretch reads ADALWWGVVTVTTIGYGDKVP. Residues 320-321 lie on the Extracellular side of the membrane; sequence QT. The helical transmembrane segment at 322–347 threads the bilayer; sequence WVGKTIASCFSVFAISFFALPAGILG. Over 348–668 the chain is Cytoplasmic; it reads SGFALKVQQK…VPQTGPDEGS (321 aa). The interaction with CALM stretch occupies residues 369–381; it reads AAASLIQTAWRCY. Phosphoserine is present on residues Ser406 and Ser408. An interaction with CALM; calcium-dependent region spans residues 514-528; that stretch reads KVIRRMQYFVAKKKF. Positions 534–571 are interaction with KCNE1 C-terminus; it reads PYDVRDVIEQYSQGHLNLMVRIKELQRRLDQSIGKPSL. A coiled-coil region spans residues 584-620; it reads SNTIGARLNRVEDKVTQLDQRLVIITDMLHQLLSMQQ. Residues 587–615 are interaction with AKAP9; that stretch reads IGARLNRVEDKVTQLDQRLVIITDMLHQL. A C-terminal assembly domain (tetramerization) region spans residues 588 to 619; the sequence is GARLNRVEDKVTQLDQRLVIITDMLHQLLSMQ.

It belongs to the potassium channel family. KQT (TC 1.A.1.15) subfamily. Kv7.1/KCNQ1 sub-subfamily. In terms of assembly, tetramer. Heterotetramer with KCNE1; form the native cardiac channel I(Ks) which increases the amplitude and slows down the activation kinetics of outward potassium current and targets to the membrane raft. Interacts (via C-terminus) with CALM; forms a heterooctameric structure (with 4:4 KCNQ1:CALM stoichiometry) in a calcium-independent manner. Interacts with AKAP9; targets protein kinase A (PKA) catalytic and regulatory subunits and protein phosphatase 1 (PP1) to the KCNQ1-KCNE1 complex, allowing PKA-mediated phosphorylation and increase of delayed rectifier potassium channel activity. Interacts with KCNE2; form an heterooligomer complex that targets to the membrane raft and leading to currents with an apparently instantaneous activation, a rapid deactivation process and a linear current-voltage relationship and decreases the amplitude of the outward current. Interacts with AP2M1; mediates estrogen-induced internalization via clathrin-coated vesicles. Interacts with NEDD4L; promotes internalization and decreases I(Ks) currents. Interacts with USP2; counteracts the NEDD4L-specific down-regulation of I(Ks) and restore plasma membrane localization. Heterotetramer with KCNQ5; has a voltage-gated potassium channel activity. Interacts with KCNE3; four KCNE3 molecules are bound to one KCNQ1 tetramer (4:4 KCNQ1:KCNE3 stoichiometry); alters membrane raft localization; affects KCNQ1 structure and gating properties. Interacts with KCNE4; impairs KCNQ1 localization in lipid rafts and inhibits voltage-gated potassium channel activity. Interacts with KCNE5; impairs KCNQ1 localization in lipid rafts and only conducts current upon strong and continued depolarization. Interacts with SLC5A3; forms coregulatory channel-transporter complexes that modulate Na(+)-coupled myo-inositol influx through the transporter. Phosphorylation at Ser-27 by PKA; increases delayed rectifier potassium channel activity of the KCNQ1-KCNE1 complex through a macromolecular complex that includes PKA, PP1, and the targeting protein AKAP9. In terms of processing, ubiquitinated by NEDD4L; promotes internalization. The ubiquitinylated form is internalized through a clathrin-mediated endocytosis by interacting with AP2M1 and is recycled back to the cell membrane via RAB4A and RAB11A. Post-translationally, deubiquitinated by USP2; counteracts the NEDD4L-specific down-regulation of I(Ks) and restores the membrane localization. As to expression, expressed in heart, kidney and salivary glands. Detected in the cochlea. Almost undetectable in brain, skeletal muscle and liver. Widely expressed in embryonic and neonatal tissues. Expressed in choroid plexus epithelium (at protein level).

The protein resides in the cell membrane. The protein localises to the cytoplasmic vesicle membrane. Its subcellular location is the early endosome. It localises to the membrane raft. It is found in the endoplasmic reticulum. The protein resides in the basolateral cell membrane. The protein localises to the apical cell membrane. It catalyses the reaction K(+)(in) = K(+)(out). With respect to regulation, PIP2 molecule is essential to activate KCNQ channels by inducing the coupling of the voltage-sensing domain (VSD) and the pore-forming domain (PD). Upon channel activation, PIP2 disrupts the VSD-calmodulin/CALM interactions, causing the release of CALM from the VSD which triggers the opening of the gate. Calcium potentiates KCNQ1 channel current through calcium-bound CALM. Calcium-bound CALM competes with PIP2 to stabilize the channel open state. In terms of biological role, pore-forming subunit of the voltage-gated potassium (Kv) channel involved in the regulation of cardiomyocyte excitability and important in normal development and functions of myocardium, inner ear, stomach and colon. Associates with KCNE beta subunits that modulates current kinetics. Induces a voltage-dependent by rapidly activating and slowly deactivating potassium-selective outward current. Also promotes a delayed voltage activated potassium current showing outward rectification characteristic. During beta-adrenergic receptor stimulation participates in cardiac increases the amplitude and slows down the activation kinetics of outward potassium current I(Ks). Muscarinic agonist oxotremorine-M strongly suppresses KCNQ1/KCNE1 current. When associated with KCNE3, forms the potassium channel that is important for cyclic AMP-stimulated intestinal secretion of chloride ions. This interaction with KCNE3 is reduced by 17beta-estradiol, resulting in the reduction of currents. During conditions of increased substrate load, maintains the driving force for proximal tubular and intestinal sodium ions absorption, gastric acid secretion, and cAMP-induced jejunal chloride ions secretion. Allows the provision of potassium ions to the luminal membrane of the secretory canaliculus in the resting state as well as during stimulated acid secretion. When associated with KCNE2, forms a heterooligomer complex leading to currents with an apparently instantaneous activation, a rapid deactivation process and a linear current-voltage relationship and decreases the amplitude of the outward current. When associated with KCNE4, inhibits voltage-gated potassium channel activity. When associated with KCNE5, this complex only conducts current upon strong and continued depolarization. Also forms a heterotetramer with KCNQ5; has a voltage-gated potassium channel activity. Binds with phosphatidylinositol 4,5-bisphosphate. KCNQ1-KCNE2 channel associates with Na(+)-coupled myo-inositol symporter in the apical membrane of choroid plexus epithelium and regulates the myo-inositol gradient between blood and cerebrospinal fluid with an impact on neuron excitability. This chain is Potassium voltage-gated channel subfamily KQT member 1, found in Mus musculus (Mouse).